We begin with the raw amino-acid sequence, 83 residues long: Small ribosomal subunit protein bS18 (83 aa).

Belongs to the bacterial ribosomal protein bS18 family. As to quaternary structure, part of the 30S ribosomal subunit. Forms a tight heterodimer with protein bS6.

Binds as a heterodimer with protein bS6 to the central domain of the 16S rRNA, where it helps stabilize the platform of the 30S subunit. The polypeptide is Small ribosomal subunit protein bS18 (Methylobacterium sp. (strain 4-46)).